Here is a 500-residue protein sequence, read N- to C-terminus: L-arabinose isomerase (500 aa).

Mn(2+)-binding residues include Glu-306, Glu-333, His-350, and His-450.

This sequence belongs to the arabinose isomerase family. In terms of assembly, homohexamer. Mn(2+) serves as cofactor.

The catalysed reaction is beta-L-arabinopyranose = L-ribulose. Its pathway is carbohydrate degradation; L-arabinose degradation via L-ribulose; D-xylulose 5-phosphate from L-arabinose (bacterial route): step 1/3. Catalyzes the conversion of L-arabinose to L-ribulose. The sequence is that of L-arabinose isomerase from Salmonella paratyphi A (strain ATCC 9150 / SARB42).